The chain runs to 517 residues: Alpha-amylase (517 aa).

A signal peptide spans 1 to 21; it reads MAHLLLAVVAITLALSQSVFG. A disulfide bond links C52 and C108. Ca(2+)-binding residues include N122, R178, and D187. Position 215 (R215) interacts with chloride. Residue D217 is the Nucleophile of the active site. Ca(2+) is bound at residue H221. The active-site Proton donor is E253. R355 serves as a coordination point for chloride. 2 cysteine pairs are disulfide-bonded: C397–C403 and C470–C482.

The protein belongs to the glycosyl hydrolase 13 family. As to quaternary structure, monomer. Requires Ca(2+) as cofactor. Chloride is required as a cofactor.

Its subcellular location is the secreted. The catalysed reaction is Endohydrolysis of (1-&gt;4)-alpha-D-glucosidic linkages in polysaccharides containing three or more (1-&gt;4)-alpha-linked D-glucose units.. With respect to regulation, activated by chloride ions. Inhibited by acarbose. Not inhibited by wheat alpha-amylase inhibitors 1 (WI-1, the tetrameric form) or 3 (WI-3, the monomeric form) and bean alpha-amylase inhibitor 1 (alphaAI-1). The chain is Alpha-amylase from Acarus siro (Flour mite).